We begin with the raw amino-acid sequence, 91 residues long: Putative regulatory protein Helmi_20580 (91 aa).

This sequence belongs to the RemA family.

This Heliobacterium modesticaldum (strain ATCC 51547 / Ice1) protein is Putative regulatory protein Helmi_20580.